A 258-amino-acid chain; its full sequence is Putative [LysW]-aminoadipate/[LysW]-glutamate kinase (258 aa).

Substrate is bound by residues glycine 33–glycine 34, arginine 60, and asparagine 164.

Belongs to the acetylglutamate kinase family. LysZ subfamily.

Its subcellular location is the cytoplasm. The catalysed reaction is [amino-group carrier protein]-C-terminal-N-(1,4-dicarboxybutan-1-yl)-L-glutamine + ATP = [amino-group carrier protein]-C-terminal-N-(1-carboxy-5-phosphooxy-5-oxopentan-1-yl)-L-glutamine + ADP. It carries out the reaction [amino-group carrier protein]-C-terminal-gamma-(L-glutamyl)-L-glutamate + ATP = [amino-group carrier protein]-C-terminal-gamma-(5-phospho-L-glutamyl)-L-glutamate + ADP. The protein operates within amino-acid biosynthesis; L-lysine biosynthesis via AAA pathway; L-lysine from L-alpha-aminoadipate (Thermus route): step 2/5. It functions in the pathway amino-acid biosynthesis; L-arginine biosynthesis. Functionally, involved in both the arginine and lysine biosynthetic pathways. Phosphorylates the LysW-bound precursors glutamate (for arginine biosynthesis), respectively alpha-aminoadipate (for lysine biosynthesis). This is Putative [LysW]-aminoadipate/[LysW]-glutamate kinase from Caldivirga maquilingensis (strain ATCC 700844 / DSM 13496 / JCM 10307 / IC-167).